We begin with the raw amino-acid sequence, 1393 residues long: ABC transporter G family member 3 (1393 aa).

Over residues 1–14 the composition is skewed to basic and acidic residues; it reads MEDKNNIELQEKAP. Residues 1–68 are disordered; sequence MEDKNNIELQ…IIYQNPTPAS (68 aa). Over residues 15–50 the composition is skewed to low complexity; that stretch reads DNYNNNNNNNNNNNNNNNNNNNNNNNNNNNNNNDIN. In terms of domain architecture, ABC transporter 1 spans 100 to 353; that stretch reads VSANNISYYI…YFSSIGLAPL (254 aa). 144–151 contributes to the ATP binding site; sequence GIPGAGKS. Residues 473-698 form the ABC transmembrane type-2 1 domain; that stretch reads MQYAVRFFQA…SYADGGYQGN (226 aa). 7 helical membrane-spanning segments follow: residues 479-499, 509-529, 558-578, 585-605, 615-635, 640-660, and 724-744; these read FFQAIFMGCVIGSLFVKMGFT, LVYFAMVLHIWTTIGSVEEFF, IPISLIEAILFSSCCYWIAGF, FIVFILGMALTNLIAQGIFQV, LASLICPAIVVLFMIMSGYMI, IPGWWIWLNALSPLRYVIDMV, and VDIVIILGFVCTFFFIFFLGV. Positions 783–1035 constitute an ABC transporter 2 domain; it reads MTFQNLNYVV…VIQHFTSAGY (253 aa). 828 to 835 is a binding site for ATP; it reads GPSGAGKS. An ABC transmembrane type-2 2 domain is found at 1121–1388; that stretch reads QTILLRFLRS…FLGYLALRFI (268 aa). A run of 6 helical transmembrane segments spans residues 1122–1142, 1157–1177, 1206–1226, 1235–1255, 1265–1285, and 1364–1384; these read TILLRFLRSFIPAIVIGTLFL, LVFLGFLFGGMASIGKVPTIV, LPMMVLTAFSYWIPMFFLTGL, FFFSLSVYLLVIMCYDSLATL, IAILVSGVGLNFLGLFGGFFI, and FYNLIILGGYFCAYTFLGYLA.

This sequence belongs to the ABC transporter superfamily. ABCG family. PDR (TC 3.A.1.205) subfamily.

The protein resides in the membrane. This Dictyostelium discoideum (Social amoeba) protein is ABC transporter G family member 3 (abcG3).